We begin with the raw amino-acid sequence, 375 residues long: Solute carrier family 35 member F2 (375 aa).

Methionine 1 bears the N-acetylmethionine mark. Residues serine 5, serine 22, serine 25, and serine 28 each carry the phosphoserine modification. The next 10 helical transmembrane spans lie at 39 to 59 (ILKT…TAIT), 73 to 93 (MLQS…MLAF), 108 to 126 (WWKY…YLIV), 136 to 156 (SVQL…WFIL), 165 to 185 (FIAV…DILA), 195 to 215 (VLIG…SNVC), 227 to 247 (EFLG…LLIV), 263 to 283 (LLFV…PLVI), 290 to 310 (SVNL…LFLF), and 314 to 334 (FSGL…LYCS). The residue at position 372 (serine 372) is a Phosphoserine.

The protein belongs to the SLC35F solute transporter family.

Its subcellular location is the membrane. In terms of biological role, putative solute transporter. The protein is Solute carrier family 35 member F2 (Slc35f2) of Mus musculus (Mouse).